An 802-amino-acid chain; its full sequence is Homeobox-leucine zipper protein ANTHOCYANINLESS 2 (802 aa).

Residues 71–143 are disordered; it reads QPERGTNRGE…RKKRYHRHTP (73 aa). Positions 103–113 are enriched in basic and acidic residues; the sequence is RSREEEHESRS. The segment covering 133-142 has biased composition (basic residues); it reads PRKKRYHRHT. Residues 134–193 constitute a DNA-binding region (homeobox); sequence RKKRYHRHTPQQIQELESMFKECPHPDEKQRLELSKRLCLETRQVKFWFQNRRTQMKTQL. A coiled-coil region spans residues 182–221; sequence FQNRRTQMKTQLERHENALLRQENDKLRAENMSIREAMRN. Positions 315 to 546 constitute an START domain; that stretch reads GIDQKSVLLE…LQRQCECLAI (232 aa).

This sequence belongs to the HD-ZIP homeobox family. Class IV subfamily. Interacts with AIL7/PLT7, ANT, BBM and AIL1. Expressed in roots, stems, leaves and floral buds.

The protein localises to the nucleus. Functionally, probable transcription factor involved in the regulation of the tissue-specific accumulation of anthocyanins and in cellular organization of the primary root. The sequence is that of Homeobox-leucine zipper protein ANTHOCYANINLESS 2 from Arabidopsis thaliana (Mouse-ear cress).